The primary structure comprises 624 residues: Chaperone protein HtpG (624 aa).

The tract at residues 1–336 (MKGQETRGFQ…SNDLPLNVSR (336 aa)) is a; substrate-binding. Residues 337–552 (EILQDSTVTR…ADEMSTQMAK (216 aa)) are b. The c stretch occupies residues 553–624 (LFAAAGQSVP…IRRMNQLLVS (72 aa)).

Belongs to the heat shock protein 90 family. In terms of assembly, homodimer. Post-translationally, UMPylated on a histidine residue by YdiU under ATP-limited conditions.

The protein resides in the cytoplasm. With respect to regulation, UMPylation of the chaperone by YdiU negatively regulates its activity, facilitating Salmonella survival under ATP-limited conditions. Molecular chaperone. Has ATPase activity. In Salmonella typhimurium (strain LT2 / SGSC1412 / ATCC 700720), this protein is Chaperone protein HtpG.